The chain runs to 266 residues: uncharacterized protein (266 aa).

The protein belongs to the chlamydial CPn_0087/CT_309/TC_0583 family.

This is an uncharacterized protein from Chlamydia pneumoniae (Chlamydophila pneumoniae).